Here is a 277-residue protein sequence, read N- to C-terminus: UPF0276 protein PSEEN3355 (277 aa).

Belongs to the UPF0276 family.

The chain is UPF0276 protein PSEEN3355 from Pseudomonas entomophila (strain L48).